The sequence spans 195 residues: Interferon tau-2 (195 aa).

A signal peptide spans 1 to 23; the sequence is MAFVLSLLMALVLVSYGPGGSLG. 2 disulfide bridges follow: Cys24–Cys122 and Cys52–Cys162.

It belongs to the alpha/beta interferon family. IFN-alphaII subfamily. Constitutively and exclusively expressed in the mononuclear cells of the extraembryonic trophectoderm.

It localises to the secreted. Its function is as follows. Paracrine hormone primarily responsible for maternal recognition of pregnancy. Interacts with endometrial receptors, probably type I interferon receptors, and blocks estrogen receptor expression, preventing the estrogen-induced increase in oxytocin receptor expression in the endometrium. This results in the suppression of the pulsatile endometrial release of the luteolytic hormone prostaglandin F2-alpha, hindering the regression of the corpus luteum (luteolysis) and therefore a return to ovarian cyclicity. This, and a possible direct effect of IFN-tau on prostaglandin synthesis, leads in turn to continued ovarian progesterone secretion, which stimulates the secretion by the endometrium of the nutrients required for the growth of the conceptus. In summary, displays particularly high antiviral and antiproliferative potency concurrently with particular weak cytotoxicity, high antiluteolytic activity and immunomodulatory properties. In contrast with other IFNs, IFN-tau is not virally inducible. In Ovis aries (Sheep), this protein is Interferon tau-2 (IFNT2).